The sequence spans 187 residues: UPF0301 protein KPN78578_33170 (187 aa).

It belongs to the UPF0301 (AlgH) family.

This is UPF0301 protein KPN78578_33170 from Klebsiella pneumoniae subsp. pneumoniae (strain ATCC 700721 / MGH 78578).